Here is a 117-residue protein sequence, read N- to C-terminus: Non-specific lipid-transfer protein 2B (117 aa).

Residues 1–25 form the signal peptide; sequence MARAQLVLVALVAALLLAGPHTTMA. 4 disulfide bridges follow: C29–C76, C39–C53, C54–C99, and C74–C113.

It belongs to the plant LTP family. In terms of tissue distribution, expressed in roots, mesocotyls and developing leaves.

Its function is as follows. Plant non-specific lipid-transfer proteins transfer phospholipids as well as galactolipids across membranes. May play a role in wax or cutin deposition in the cell walls of expanding epidermal cells and certain secretory tissues. In Oryza sativa subsp. japonica (Rice), this protein is Non-specific lipid-transfer protein 2B (LTP2-B).